The sequence spans 406 residues: MKNVPKIWTVAELTREIGQTLNDNPDFVNCWVSGEISNYKNHRPSGHWYFTLKDEQSSMKGVMFRSRAERVRFTPQDGMKVLVRGSIRIYERDGTIQLYAEEMQPSGVGALYLAFEQLKERLGQEGLFAPERKKAIPRYPRRIGIVTSPTGAAIKDILKVMFRRNPQISWILAPAAVQGELAPKEVAQAIARLNRHSQVDVIIVGRGGGSLEELWAFNTEEVARAIAASGIPVISAVGHETDVTIADMVADLRAPTPSAAAELAVPVWRELKSDLEQLEARLHSTMSSQLQRKRQRLDSLKTIGPLSNPFWRIDQNRQRLDSLSERVEQGMTRFVSDKNGILKLLTAKLDLLSPLAILGRGYSLTYGPKGNVLRKSDDINVGQQVQVRLQQGILTCAVLAKSVDSD.

It belongs to the XseA family. Heterooligomer composed of large and small subunits.

The protein localises to the cytoplasm. The catalysed reaction is Exonucleolytic cleavage in either 5'- to 3'- or 3'- to 5'-direction to yield nucleoside 5'-phosphates.. Its function is as follows. Bidirectionally degrades single-stranded DNA into large acid-insoluble oligonucleotides, which are then degraded further into small acid-soluble oligonucleotides. This is Exodeoxyribonuclease 7 large subunit from Desulfitobacterium hafniense (strain Y51).